The following is a 71-amino-acid chain: ATP synthase subunit c 1 (71 aa).

2 helical membrane-spanning segments follow: residues 4–24 and 46–66; these read FIGA…VGHV and LFVG…IALL.

This sequence belongs to the ATPase C chain family. In terms of assembly, F-type ATPases have 2 components, F(1) - the catalytic core - and F(0) - the membrane proton channel. F(1) has five subunits: alpha(3), beta(3), gamma(1), delta(1), epsilon(1). F(0) has four main subunits: a(1), b(1), b'(1) and c(10-14). The alpha and beta chains form an alternating ring which encloses part of the gamma chain. F(1) is attached to F(0) by a central stalk formed by the gamma and epsilon chains, while a peripheral stalk is formed by the delta, b and b' chains.

Its subcellular location is the cell inner membrane. F(1)F(0) ATP synthase produces ATP from ADP in the presence of a proton or sodium gradient. F-type ATPases consist of two structural domains, F(1) containing the extramembraneous catalytic core and F(0) containing the membrane proton channel, linked together by a central stalk and a peripheral stalk. During catalysis, ATP synthesis in the catalytic domain of F(1) is coupled via a rotary mechanism of the central stalk subunits to proton translocation. Functionally, key component of the F(0) channel; it plays a direct role in translocation across the membrane. A homomeric c-ring of between 10-14 subunits forms the central stalk rotor element with the F(1) delta and epsilon subunits. The protein is ATP synthase subunit c 1 of Cereibacter sphaeroides (strain ATCC 17029 / ATH 2.4.9) (Rhodobacter sphaeroides).